The following is a 223-amino-acid chain: Ubiquitin carboxyl-terminal hydrolase isozyme L1 (223 aa).

An N-acetylmethionine modification is found at methionine 1. Residues 2–221 enclose the UCH catalytic domain; it reads QLKPMEINPE…VRFSAVALCK (220 aa). Residues 5–10 are interaction with ubiquitin; that stretch reads PMEINP. The active-site Nucleophile is the cysteine 90. At serine 125 the chain carries Phosphoserine. Histidine 161 acts as the Proton donor in catalysis. The interval 211-216 is interaction with ubiquitin; sequence EVRFSA. A lipid anchor (S-farnesyl cysteine) is attached at cysteine 220. The propeptide at 221 to 223 is removed in mature form; sequence KAA.

The protein belongs to the peptidase C12 family. In terms of assembly, monomer. Homodimer. Interacts with COPS5 and SNCA. Post-translationally, O-glycosylated. In terms of tissue distribution, expressed in brain, where it is found in neurons but not in oligodendrocytes or astrocytes. Found in the ganglion cell layer and the inner nuclear layer of the retina (at protein level). Expressed in brain and testis. In the brain, expression is at its lowest in replaceable neurons of hippocampus and olfactory bulb. Highly expressed in senescent pituitary. In skeletal muscle, primarily expressed in oxidative muscle fibers.

The protein resides in the cytoplasm. Its subcellular location is the endoplasmic reticulum membrane. The enzyme catalyses Thiol-dependent hydrolysis of ester, thioester, amide, peptide and isopeptide bonds formed by the C-terminal Gly of ubiquitin (a 76-residue protein attached to proteins as an intracellular targeting signal).. In terms of biological role, deubiquitinase that plays a role in the regulation of several processes such as maintenance of synaptic function, cardiac function, inflammatory response or osteoclastogenesis. Abrogates the ubiquitination of multiple proteins including WWTR1/TAZ, EGFR, HIF1A and beta-site amyloid precursor protein cleaving enzyme 1/BACE1. In addition, recognizes and hydrolyzes a peptide bond at the C-terminal glycine of ubiquitin to maintain a stable pool of monoubiquitin that is a key requirement for the ubiquitin-proteasome and the autophagy-lysosome pathways. Regulates amyloid precursor protein/APP processing by promoting BACE1 degradation resulting in decreased amyloid beta production. Plays a role in the immune response by regulating the ability of MHC I molecules to reach cross-presentation compartments competent for generating Ag-MHC I complexes. Mediates the 'Lys-48'-linked deubiquitination of the transcriptional coactivator WWTR1/TAZ leading to its stabilization and inhibition of osteoclastogenesis. Deubiquitinates and stabilizes epidermal growth factor receptor EGFR to prevent its degradation and to activate its downstream mediators. Modulates oxidative activity in skeletal muscle by regulating key mitochondrial oxidative proteins. Enhances the activity of hypoxia-inducible factor 1-alpha/HIF1A by abrogateing its VHL E3 ligase-mediated ubiquitination and consequently inhibiting its degradation. In Mus musculus (Mouse), this protein is Ubiquitin carboxyl-terminal hydrolase isozyme L1 (Uchl1).